The sequence spans 456 residues: Argininosuccinate lyase (456 aa).

The protein belongs to the lyase 1 family. Argininosuccinate lyase subfamily.

Its subcellular location is the cytoplasm. It carries out the reaction 2-(N(omega)-L-arginino)succinate = fumarate + L-arginine. It participates in amino-acid biosynthesis; L-arginine biosynthesis; L-arginine from L-ornithine and carbamoyl phosphate: step 3/3. This is Argininosuccinate lyase from Listeria monocytogenes serotype 4b (strain CLIP80459).